We begin with the raw amino-acid sequence, 349 residues long: Phenylalanine--tRNA ligase alpha subunit (349 aa).

Glu-262 lines the Mg(2+) pocket.

The protein belongs to the class-II aminoacyl-tRNA synthetase family. Phe-tRNA synthetase alpha subunit type 1 subfamily. Tetramer of two alpha and two beta subunits. The cofactor is Mg(2+).

It is found in the cytoplasm. The enzyme catalyses tRNA(Phe) + L-phenylalanine + ATP = L-phenylalanyl-tRNA(Phe) + AMP + diphosphate + H(+). The sequence is that of Phenylalanine--tRNA ligase alpha subunit from Sorangium cellulosum (strain So ce56) (Polyangium cellulosum (strain So ce56)).